A 76-amino-acid chain; its full sequence is Conotoxin Gla(1)-TxVI (76 aa).

The first 19 residues, 1 to 19 (MEKLTILLLVAAVLMSTQA), serve as a signal peptide directing secretion. A propeptide spanning residues 20-45 (LVERAGENHSKENINFLLKRKRAADR) is cleaved from the precursor. W48 is subject to 6'-bromotryptophan. E50 bears the 4-carboxyglutamate mark. 3 disulfides stabilise this stretch: C51-C65, C58-C69, and C64-C73. A 4-hydroxyproline modification is found at P61. 4-carboxyglutamate is present on residues E63, E67, and E70. W76 carries the post-translational modification 6'-bromotryptophan.

As to expression, expressed by the venom duct.

The protein localises to the secreted. This Conus textile (Cloth-of-gold cone) protein is Conotoxin Gla(1)-TxVI.